The chain runs to 80 residues: Defensin-like protein 204 (80 aa).

A signal peptide spans 1–29 (MAKTFSSICFTTLLLVVLFISTEIPKSEA). 3 disulfide bridges follow: Cys43–Cys64, Cys48–Cys73, and Cys52–Cys75.

It belongs to the DEFL family.

It localises to the secreted. The polypeptide is Defensin-like protein 204 (Arabidopsis thaliana (Mouse-ear cress)).